The primary structure comprises 445 residues: tRNA-2-methylthio-N(6)-dimethylallyladenosine synthase (445 aa).

Residues 3–124 (KKLYIKTYGC…LPELISKVVR (122 aa)) enclose the MTTase N-terminal domain. The [4Fe-4S] cluster site is built by Cys-12, Cys-48, Cys-87, Cys-162, Cys-166, and Cys-169. Positions 148-380 (YPQGTSAFIS…QQELMAQQLA (233 aa)) constitute a Radical SAM core domain. The 63-residue stretch at 383 to 445 (TSCVGSTMKV…SLNSLTGEIL (63 aa)) folds into the TRAM domain.

The protein belongs to the methylthiotransferase family. MiaB subfamily. Monomer. Requires [4Fe-4S] cluster as cofactor.

The protein resides in the cytoplasm. It carries out the reaction N(6)-dimethylallyladenosine(37) in tRNA + (sulfur carrier)-SH + AH2 + 2 S-adenosyl-L-methionine = 2-methylsulfanyl-N(6)-dimethylallyladenosine(37) in tRNA + (sulfur carrier)-H + 5'-deoxyadenosine + L-methionine + A + S-adenosyl-L-homocysteine + 2 H(+). Functionally, catalyzes the methylthiolation of N6-(dimethylallyl)adenosine (i(6)A), leading to the formation of 2-methylthio-N6-(dimethylallyl)adenosine (ms(2)i(6)A) at position 37 in tRNAs that read codons beginning with uridine. The chain is tRNA-2-methylthio-N(6)-dimethylallyladenosine synthase from Rickettsia rickettsii (strain Iowa).